Reading from the N-terminus, the 159-residue chain is Large ribosomal subunit protein uL10 (159 aa).

Belongs to the universal ribosomal protein uL10 family. In terms of assembly, part of the ribosomal stalk of the 50S ribosomal subunit. The N-terminus interacts with L11 and the large rRNA to form the base of the stalk. The C-terminus forms an elongated spine to which L12 dimers bind in a sequential fashion forming a multimeric L10(L12)X complex.

Forms part of the ribosomal stalk, playing a central role in the interaction of the ribosome with GTP-bound translation factors. In Sulfurimonas denitrificans (strain ATCC 33889 / DSM 1251) (Thiomicrospira denitrificans (strain ATCC 33889 / DSM 1251)), this protein is Large ribosomal subunit protein uL10.